Here is a 128-residue protein sequence, read N- to C-terminus: S-adenosylmethionine decarboxylase proenzyme (128 aa).

Residue S63 is the Schiff-base intermediate with substrate; via pyruvic acid of the active site. Pyruvic acid (Ser); by autocatalysis is present on S63. H68 acts as the Proton acceptor; for processing activity in catalysis. Catalysis depends on C83, which acts as the Proton donor; for catalytic activity.

It belongs to the prokaryotic AdoMetDC family. Type 1 subfamily. In terms of assembly, heterotetramer of two alpha and two beta chains arranged as a dimer of alpha/beta heterodimers. Requires pyruvate as cofactor. Post-translationally, is synthesized initially as an inactive proenzyme. Formation of the active enzyme involves a self-maturation process in which the active site pyruvoyl group is generated from an internal serine residue via an autocatalytic post-translational modification. Two non-identical subunits are generated from the proenzyme in this reaction, and the pyruvate is formed at the N-terminus of the alpha chain, which is derived from the carboxyl end of the proenzyme. The post-translation cleavage follows an unusual pathway, termed non-hydrolytic serinolysis, in which the side chain hydroxyl group of the serine supplies its oxygen atom to form the C-terminus of the beta chain, while the remainder of the serine residue undergoes an oxidative deamination to produce ammonia and the pyruvoyl group blocking the N-terminus of the alpha chain.

It carries out the reaction S-adenosyl-L-methionine + H(+) = S-adenosyl 3-(methylsulfanyl)propylamine + CO2. The protein operates within amine and polyamine biosynthesis; S-adenosylmethioninamine biosynthesis; S-adenosylmethioninamine from S-adenosyl-L-methionine: step 1/1. Functionally, catalyzes the decarboxylation of S-adenosylmethionine to S-adenosylmethioninamine (dcAdoMet), the propylamine donor required for the synthesis of the polyamines spermine and spermidine from the diamine putrescine. The polypeptide is S-adenosylmethionine decarboxylase proenzyme (Leptospira borgpetersenii serovar Hardjo-bovis (strain JB197)).